The chain runs to 228 residues: MNLIRIELRKMKMGWYIRGALIANVIIMGFMWLISYSEKADGGVSFQSTDEAFLIIGTFVRAVFIVFGAVLIVKLVISEYKNKTILVMFTYPISRKKLLTAKLMIAGGLTFITILLSNILIAAGFFWLNSICHFIPGELTSEIISQQAVKMAVFAFGAAGTSLVPIFFGMRRHSVPATIISSVVIVMLISSTSPGFSISSVVYIPLSLAAFGLFFSYMAIRNADKQDA.

6 helical membrane-spanning segments follow: residues 14 to 34 (GWYI…MWLI), 53 to 73 (FLII…VLIV), 108 to 128 (GLTF…FFWL), 148 to 168 (AVKM…PIFF), 178 to 198 (TIIS…GFSI), and 200 to 220 (SVVY…YMAI).

The protein resides in the cell membrane. This is an uncharacterized protein from Bacillus subtilis (strain 168).